Consider the following 617-residue polypeptide: Threonine--tRNA ligase (617 aa).

Residues 209 to 502 (DHRRLGKDLD…MTENYAGDFP (294 aa)) form a catalytic region. Zn(2+) is bound by residues Cys-302, His-353, and His-479.

Belongs to the class-II aminoacyl-tRNA synthetase family. In terms of assembly, homodimer. Zn(2+) serves as cofactor.

It localises to the cytoplasm. The enzyme catalyses tRNA(Thr) + L-threonine + ATP = L-threonyl-tRNA(Thr) + AMP + diphosphate + H(+). Functionally, catalyzes the attachment of threonine to tRNA(Thr) in a two-step reaction: L-threonine is first activated by ATP to form Thr-AMP and then transferred to the acceptor end of tRNA(Thr). Also edits incorrectly charged L-seryl-tRNA(Thr). This is Threonine--tRNA ligase from Synechococcus sp. (strain CC9311).